Reading from the N-terminus, the 136-residue chain is Large ribosomal subunit protein uL16 (136 aa).

This sequence belongs to the universal ribosomal protein uL16 family. In terms of assembly, part of the 50S ribosomal subunit.

Its function is as follows. Binds 23S rRNA and is also seen to make contacts with the A and possibly P site tRNAs. The chain is Large ribosomal subunit protein uL16 from Aggregatibacter actinomycetemcomitans (Actinobacillus actinomycetemcomitans).